Consider the following 186-residue polypeptide: Serine hydrolase RBBP9 (186 aa).

The interval 63–67 (LHCDE) is involved in binding to RB1. Active-site charge relay system residues include Ser75, Asp138, and His165.

The protein belongs to the RBBP9 family. In terms of assembly, interacts with RB1; the interaction disrupts RB1 binding to E2F1. Interacts with RBL1 and RBL2. As to expression, expressed at higher levels in tumor tissues such as carcinoma.

It carries out the reaction valacyclovir + H2O = acyclovir + L-valine + H(+). Inhibited by the natural product emetine produced by the ipecac root. In terms of biological role, serine hydrolase. Catalyzes the hydrolytic activation of amino acid ester of the antiviral prodrug valacyclovir to its corresponding active drug, acyclovir. May negatively regulate basal or autocrine TGF-beta signaling by suppressing SMAD2-SMAD3 phosphorylation. May play a role in the transformation process due to its capacity to confer resistance to the growth-inhibitory effects of TGF-beta through interaction with RB1 and the subsequent displacement of E2F1. This is Serine hydrolase RBBP9 from Homo sapiens (Human).